Reading from the N-terminus, the 351-residue chain is sn-1 oleoyl-lipid 12-desaturase (351 aa).

The interval 1 to 20 (MTLSIVKSEDSSSRPSAVPS) is disordered. Transmembrane regions (helical) follow at residues 44 to 62 (AWMTVIINVVMVGLGWLGI) and 68 to 88 (FLLPVVWVFTGTALTGFFVIG). The Histidine box-1 signature appears at 89 to 93 (HDCGH). A helical transmembrane segment spans residues 100–120 (VWVNDWVGHILFLPIIYPFHS). Residues 125–129 (HNQHH) carry the Histidine box-2 motif. 2 helical membrane passes run 199–219 (LLVIGAAAIAFPTMILTIGVW) and 221–241 (FVKFWVIPWLVFHFWMSTFTL). The Histidine box-3 motif lies at 289-293 (HHVTT).

Belongs to the fatty acid desaturase type 2 family. It depends on Fe(2+) as a cofactor.

It localises to the cellular thylakoid membrane. It carries out the reaction a 1-[(9Z)-octadecenoyl]-2-acyl-glycerolipid + 2 reduced [2Fe-2S]-[ferredoxin] + O2 + 2 H(+) = a 1-[(9Z,12Z)-octadecdienoyl]-2-acyl-glycerolipid + 2 oxidized [2Fe-2S]-[ferredoxin] + 2 H2O. Its pathway is lipid metabolism; polyunsaturated fatty acid biosynthesis. Functionally, desaturase involved in fatty acid biosynthesis. Introduces a double bond at carbon 12 of oleoyl groups (18:1) attached to the sn-1 position of the glycerol moiety of membrane glycerolipids. The sequence is that of sn-1 oleoyl-lipid 12-desaturase from Arthrospira platensis (Spirulina platensis).